A 314-amino-acid polypeptide reads, in one-letter code: Transcriptional activator RhrA (314 aa).

The 101-residue stretch at 210–310 (ASIKMRVEQN…GVRPSDLRRL (101 aa)) folds into the HTH araC/xylS-type domain. 2 consecutive DNA-binding regions (H-T-H motif) follow at residues 228–249 (TDVA…SREG) and 277–300 (ISQI…RSRY).

Transcriptional activator of the rhizobactin regulon. The protein is Transcriptional activator RhrA (rhrA) of Rhizobium meliloti (strain 1021) (Ensifer meliloti).